The following is a 396-amino-acid chain: Tryptophan synthase beta chain (396 aa).

Lys88 carries the post-translational modification N6-(pyridoxal phosphate)lysine.

The protein belongs to the TrpB family. In terms of assembly, tetramer of two alpha and two beta chains. Pyridoxal 5'-phosphate is required as a cofactor.

The catalysed reaction is (1S,2R)-1-C-(indol-3-yl)glycerol 3-phosphate + L-serine = D-glyceraldehyde 3-phosphate + L-tryptophan + H2O. Its pathway is amino-acid biosynthesis; L-tryptophan biosynthesis; L-tryptophan from chorismate: step 5/5. Its function is as follows. The beta subunit is responsible for the synthesis of L-tryptophan from indole and L-serine. This chain is Tryptophan synthase beta chain, found in Shewanella oneidensis (strain ATCC 700550 / JCM 31522 / CIP 106686 / LMG 19005 / NCIMB 14063 / MR-1).